The chain runs to 208 residues: ATP-dependent Clp protease proteolytic subunit (208 aa).

S106 acts as the Nucleophile in catalysis. The active site involves H131.

Belongs to the peptidase S14 family. As to quaternary structure, fourteen ClpP subunits assemble into 2 heptameric rings which stack back to back to give a disk-like structure with a central cavity, resembling the structure of eukaryotic proteasomes.

It is found in the cytoplasm. The enzyme catalyses Hydrolysis of proteins to small peptides in the presence of ATP and magnesium. alpha-casein is the usual test substrate. In the absence of ATP, only oligopeptides shorter than five residues are hydrolyzed (such as succinyl-Leu-Tyr-|-NHMec, and Leu-Tyr-Leu-|-Tyr-Trp, in which cleavage of the -Tyr-|-Leu- and -Tyr-|-Trp bonds also occurs).. Functionally, cleaves peptides in various proteins in a process that requires ATP hydrolysis. Has a chymotrypsin-like activity. Plays a major role in the degradation of misfolded proteins. The chain is ATP-dependent Clp protease proteolytic subunit from Caulobacter sp. (strain K31).